The primary structure comprises 106 residues: uncharacterized protein (106 aa).

This is an uncharacterized protein from Escherichia coli O6:H1 (strain CFT073 / ATCC 700928 / UPEC).